The following is a 389-amino-acid chain: Serpentine receptor class alpha/beta-14 (389 aa).

Residues 1–45 lie on the Extracellular side of the membrane; it reads MPSDDFVKTARKALISHSVSIQNYTEDDCQIAFHATTNSFMQTIR. The N-linked (GlcNAc...) asparagine glycan is linked to N23. A helical transmembrane segment spans residues 46 to 66; sequence LVHIFFCTFGAISSSLFIYVL. Over 67–81 the chain is Cytoplasmic; that stretch reads LNSSSRNLHRNLRIS. Residues 82 to 102 traverse the membrane as a helical segment; the sequence is LASLAFAALIACLQLDFIAFY. Topologically, residues 103–123 are extracellular; it reads HLALTLTADNACDSMYEARKC. A disulfide bridge links C123 with C198. A helical transmembrane segment spans residues 124 to 144; the sequence is AILRFPVVLSIYATLCGIIVL. Residues 145–167 lie on the Cytoplasmic side of the membrane; sequence AIERTIATLKYKTYEANGSRVVG. A helical membrane pass occupies residues 168–188; the sequence is LVLVTGQWFVCIIVAVFSVLL. Residues 189 to 208 lie on the Extracellular side of the membrane; that stretch reads RSDPGYVHYCTAYVSHPRTS. A helical membrane pass occupies residues 209 to 229; sequence VFSLCFMSALEVATLVYFVLL. The Cytoplasmic portion of the chain corresponds to 230 to 268; the sequence is LQSNQRRQVNEFVNKAMHSLSERYQLQENVRIMKILIPS. Residues 269–289 form a helical membrane-spanning segment; sequence ITVHAILGFIGLGSMLAFAII. Residues 290–303 lie on the Extracellular side of the membrane; the sequence is YRYADERLIVGFAP. A helical membrane pass occupies residues 304–324; that stretch reads FSEVVLLVIPIYAVVFPIVAV. Topologically, residues 325–389 are cytoplasmic; that stretch reads VQNKQLRLAS…FDLLNEMWKK (65 aa).

It belongs to the nematode receptor-like protein srab family.

The protein resides in the membrane. The chain is Serpentine receptor class alpha/beta-14 from Caenorhabditis elegans.